Reading from the N-terminus, the 650-residue chain is Fructose-1,6-bisphosphatase class 3 (650 aa).

Belongs to the FBPase class 3 family. Mn(2+) serves as cofactor.

It catalyses the reaction beta-D-fructose 1,6-bisphosphate + H2O = beta-D-fructose 6-phosphate + phosphate. It functions in the pathway carbohydrate biosynthesis; gluconeogenesis. The chain is Fructose-1,6-bisphosphatase class 3 from Staphylococcus saprophyticus subsp. saprophyticus (strain ATCC 15305 / DSM 20229 / NCIMB 8711 / NCTC 7292 / S-41).